Reading from the N-terminus, the 404-residue chain is Probable tRNA sulfurtransferase (404 aa).

The THUMP domain occupies 61–166; sequence EAVSERLKDV…SGYSYIMCDE (106 aa). ATP is bound by residues 184 to 185, 209 to 210, R266, G288, and Q297; these read LL and HF.

The protein belongs to the ThiI family.

It is found in the cytoplasm. It carries out the reaction [ThiI sulfur-carrier protein]-S-sulfanyl-L-cysteine + a uridine in tRNA + 2 reduced [2Fe-2S]-[ferredoxin] + ATP + H(+) = [ThiI sulfur-carrier protein]-L-cysteine + a 4-thiouridine in tRNA + 2 oxidized [2Fe-2S]-[ferredoxin] + AMP + diphosphate. It catalyses the reaction [ThiS sulfur-carrier protein]-C-terminal Gly-Gly-AMP + S-sulfanyl-L-cysteinyl-[cysteine desulfurase] + AH2 = [ThiS sulfur-carrier protein]-C-terminal-Gly-aminoethanethioate + L-cysteinyl-[cysteine desulfurase] + A + AMP + 2 H(+). Its pathway is cofactor biosynthesis; thiamine diphosphate biosynthesis. Catalyzes the ATP-dependent transfer of a sulfur to tRNA to produce 4-thiouridine in position 8 of tRNAs, which functions as a near-UV photosensor. Also catalyzes the transfer of sulfur to the sulfur carrier protein ThiS, forming ThiS-thiocarboxylate. This is a step in the synthesis of thiazole, in the thiamine biosynthesis pathway. The sulfur is donated as persulfide by IscS. This Bacillus cereus (strain ATCC 10987 / NRS 248) protein is Probable tRNA sulfurtransferase.